A 163-amino-acid polypeptide reads, in one-letter code: ATP synthase subunit b (163 aa).

Residues 10-29 (ALYQLLAFSVLLFFLSKFAL) traverse the membrane as a helical segment.

Belongs to the ATPase B chain family. As to quaternary structure, F-type ATPases have 2 components, F(1) - the catalytic core - and F(0) - the membrane proton channel. F(1) has five subunits: alpha(3), beta(3), gamma(1), delta(1), epsilon(1). F(0) has three main subunits: a(1), b(2) and c(10-14). The alpha and beta chains form an alternating ring which encloses part of the gamma chain. F(1) is attached to F(0) by a central stalk formed by the gamma and epsilon chains, while a peripheral stalk is formed by the delta and b chains.

The protein resides in the cell membrane. Functionally, f(1)F(0) ATP synthase produces ATP from ADP in the presence of a proton or sodium gradient. F-type ATPases consist of two structural domains, F(1) containing the extramembraneous catalytic core and F(0) containing the membrane proton channel, linked together by a central stalk and a peripheral stalk. During catalysis, ATP synthesis in the catalytic domain of F(1) is coupled via a rotary mechanism of the central stalk subunits to proton translocation. Component of the F(0) channel, it forms part of the peripheral stalk, linking F(1) to F(0). The chain is ATP synthase subunit b from Alkalihalophilus pseudofirmus (strain ATCC BAA-2126 / JCM 17055 / OF4) (Bacillus pseudofirmus).